We begin with the raw amino-acid sequence, 540 residues long: Chaperonin GroEL 2 (540 aa).

Residues 30–33 (TLGP), Lys-51, 87–91 (DGTTT), Gly-415, 480–482 (NAL), and Asp-496 each bind ATP.

It belongs to the chaperonin (HSP60) family. Forms a cylinder of 14 subunits composed of two heptameric rings stacked back-to-back. Interacts with the co-chaperonin GroES.

The protein localises to the cytoplasm. The enzyme catalyses ATP + H2O + a folded polypeptide = ADP + phosphate + an unfolded polypeptide.. Its function is as follows. Together with its co-chaperonin GroES, plays an essential role in assisting protein folding. The GroEL-GroES system forms a nano-cage that allows encapsulation of the non-native substrate proteins and provides a physical environment optimized to promote and accelerate protein folding. The chain is Chaperonin GroEL 2 from Protochlamydia amoebophila (strain UWE25).